Consider the following 377-residue polypeptide: DNA-directed RNA polymerase subunit alpha (377 aa).

An alpha N-terminal domain (alpha-NTD) region spans residues 1-259 (MSDSSHNLLY…KHFSVFEKMD (259 aa)). The segment at 276-377 (KDDILHKLVL…KIRLSKNTKG (102 aa)) is alpha C-terminal domain (alpha-CTD).

The protein belongs to the RNA polymerase alpha chain family. In terms of assembly, homodimer. The RNAP catalytic core consists of 2 alpha, 1 beta, 1 beta' and 1 omega subunit. When a sigma factor is associated with the core the holoenzyme is formed, which can initiate transcription.

It catalyses the reaction RNA(n) + a ribonucleoside 5'-triphosphate = RNA(n+1) + diphosphate. Its function is as follows. DNA-dependent RNA polymerase catalyzes the transcription of DNA into RNA using the four ribonucleoside triphosphates as substrates. The polypeptide is DNA-directed RNA polymerase subunit alpha (Chlamydia trachomatis serovar A (strain ATCC VR-571B / DSM 19440 / HAR-13)).